Consider the following 146-residue polypeptide: Large ribosomal subunit protein uL15 (146 aa).

The segment at methionine 1 to glutamate 51 is disordered. Composition is skewed to gly residues over residues threonine 23–glutamine 35 and serine 42–glutamate 51.

The protein belongs to the universal ribosomal protein uL15 family. As to quaternary structure, part of the 50S ribosomal subunit.

Functionally, binds to the 23S rRNA. The polypeptide is Large ribosomal subunit protein uL15 (Streptococcus gordonii (strain Challis / ATCC 35105 / BCRC 15272 / CH1 / DL1 / V288)).